A 330-amino-acid chain; its full sequence is Aspartate--ammonia ligase (330 aa).

This sequence belongs to the class-II aminoacyl-tRNA synthetase family. AsnA subfamily.

The protein localises to the cytoplasm. It catalyses the reaction L-aspartate + NH4(+) + ATP = L-asparagine + AMP + diphosphate + H(+). It participates in amino-acid biosynthesis; L-asparagine biosynthesis; L-asparagine from L-aspartate (ammonia route): step 1/1. In Streptococcus equi subsp. equi (strain 4047), this protein is Aspartate--ammonia ligase.